A 510-amino-acid polypeptide reads, in one-letter code: Fumarate hydratase, mitochondrial (510 aa).

The transit peptide at 1–44 (MYRALWLLARSRRLVRPPASALASAPGLSGAAVPSFWPPNAARM) directs the protein to the mitochondrion. An N6-acetyllysine; alternate mark is found at Lys-61, Lys-66, and Lys-80. Residues Lys-61, Lys-66, and Lys-80 each carry the N6-succinyllysine; alternate modification. A phosphothreonine mark is found at Thr-85 and Thr-90. Lys-94 carries the N6-acetyllysine modification. Lys-115 and Lys-122 each carry N6-acetyllysine; alternate. Residues Lys-115 and Lys-122 each carry the N6-succinyllysine; alternate modification. Substrate is bound by residues 145-147 (SGT), 176-179 (HPND), and 186-188 (SSN). At Lys-213 the chain carries N6-acetyllysine. Lys-223 bears the N6-acetyllysine; alternate mark. Lys-223 carries the post-translational modification N6-succinyllysine; alternate. Thr-234 is a binding site for substrate. His-235 functions as the Proton donor/acceptor in the catalytic mechanism. Thr-236 carries the post-translational modification Phosphothreonine. Lys-256 carries the N6-acetyllysine modification. Lys-292 is modified (N6-acetyllysine; alternate). Lys-292 carries the post-translational modification N6-succinyllysine; alternate. Residue Ser-365 is part of the active site. Substrate is bound by residues Ser-366 and 371-373 (KVN). At Ser-366 the chain carries Phosphoserine. An N6-succinyllysine mark is found at Lys-467 and Lys-473. Residue Lys-502 is modified to N6-acetyllysine.

Belongs to the class-II fumarase/aspartase family. Fumarase subfamily. As to quaternary structure, homotetramer. Interacts with H2AZ1. Post-translationally, phosphorylation at Thr-236 by PRKDC in response to DNA damage promotes translocation to the nucleus and recruitment to DNA double-strand breaks (DSBs).

The protein resides in the mitochondrion. It localises to the cytoplasm. It is found in the cytosol. Its subcellular location is the nucleus. The protein localises to the chromosome. The enzyme catalyses (S)-malate = fumarate + H2O. Its pathway is carbohydrate metabolism; tricarboxylic acid cycle; (S)-malate from fumarate: step 1/1. Catalyzes the reversible stereospecific interconversion of fumarate to L-malate. Experiments in other species have demonstrated that specific isoforms of this protein act in defined pathways and favor one direction over the other. Its function is as follows. Catalyzes the hydration of fumarate to L-malate in the tricarboxylic acid (TCA) cycle to facilitate a transition step in the production of energy in the form of NADH. Functionally, catalyzes the dehydration of L-malate to fumarate. Fumarate metabolism in the cytosol plays a role during urea cycle and arginine metabolism; fumarate being a by-product of the urea cycle and amino-acid catabolism. Also plays a role in DNA repair by promoting non-homologous end-joining (NHEJ). In response to DNA damage and phosphorylation by PRKDC, translocates to the nucleus and accumulates at DNA double-strand breaks (DSBs): acts by catalyzing formation of fumarate, an inhibitor of KDM2B histone demethylase activity, resulting in enhanced dimethylation of histone H3 'Lys-36' (H3K36me2). The chain is Fumarate hydratase, mitochondrial from Macaca fascicularis (Crab-eating macaque).